A 359-amino-acid polypeptide reads, in one-letter code: Phospho-N-acetylmuramoyl-pentapeptide-transferase (359 aa).

10 helical membrane-spanning segments follow: residues 3-23 (QILF…PVLI), 53-73 (GGVA…LIGI), 84-104 (GLLV…DDFI), 117-137 (TAKL…ALQF), 156-176 (IATV…LVSA), 187-207 (LDGL…IITF), 231-251 (LALI…WNAA), 255-275 (IFMG…LSIT), 283-303 (VVIG…VAVF), and 330-350 (VIIR…ALFY).

Belongs to the glycosyltransferase 4 family. MraY subfamily. It depends on Mg(2+) as a cofactor.

Its subcellular location is the cell membrane. It catalyses the reaction UDP-N-acetyl-alpha-D-muramoyl-L-alanyl-gamma-D-glutamyl-meso-2,6-diaminopimeloyl-D-alanyl-D-alanine + di-trans,octa-cis-undecaprenyl phosphate = di-trans,octa-cis-undecaprenyl diphospho-N-acetyl-alpha-D-muramoyl-L-alanyl-D-glutamyl-meso-2,6-diaminopimeloyl-D-alanyl-D-alanine + UMP. It functions in the pathway cell wall biogenesis; peptidoglycan biosynthesis. Functionally, catalyzes the initial step of the lipid cycle reactions in the biosynthesis of the cell wall peptidoglycan: transfers peptidoglycan precursor phospho-MurNAc-pentapeptide from UDP-MurNAc-pentapeptide onto the lipid carrier undecaprenyl phosphate, yielding undecaprenyl-pyrophosphoryl-MurNAc-pentapeptide, known as lipid I. The sequence is that of Phospho-N-acetylmuramoyl-pentapeptide-transferase from Rhodococcus jostii (strain RHA1).